The sequence spans 106 residues: Large ribosomal subunit protein bL21 (106 aa).

The protein belongs to the bacterial ribosomal protein bL21 family. As to quaternary structure, part of the 50S ribosomal subunit. Contacts protein L20.

Functionally, this protein binds to 23S rRNA in the presence of protein L20. The chain is Large ribosomal subunit protein bL21 from Streptomyces griseus subsp. griseus (strain JCM 4626 / CBS 651.72 / NBRC 13350 / KCC S-0626 / ISP 5235).